The following is a 311-amino-acid chain: Methionyl-tRNA formyltransferase (311 aa).

110-113 (SLLP) contributes to the (6S)-5,6,7,8-tetrahydrofolate binding site.

Belongs to the Fmt family.

The catalysed reaction is L-methionyl-tRNA(fMet) + (6R)-10-formyltetrahydrofolate = N-formyl-L-methionyl-tRNA(fMet) + (6S)-5,6,7,8-tetrahydrofolate + H(+). Attaches a formyl group to the free amino group of methionyl-tRNA(fMet). The formyl group appears to play a dual role in the initiator identity of N-formylmethionyl-tRNA by promoting its recognition by IF2 and preventing the misappropriation of this tRNA by the elongation apparatus. The protein is Methionyl-tRNA formyltransferase of Streptococcus sanguinis (strain SK36).